We begin with the raw amino-acid sequence, 97 residues long: Apolipoprotein C-II (97 aa).

A signal peptide spans 1–22 (MGSRFFLALFLALLVLGNEVQG). Residues 63-71 (SVDEKLRDM) form a lipid binding region. The segment at 75-97 (SSAAMTTYAGIFTDQLLTLLKGE) is lipoprotein lipase cofactor.

Belongs to the apolipoprotein C2 family. In terms of processing, proapolipoprotein C-II is synthesized as a sialic acid containing glycoprotein which is subsequently desialylated prior to its proteolytic processing. Proapolipoprotein C-II, the major form found in plasma undergoes proteolytic cleavage of its N-terminal hexapeptide to generate the mature form apolipoprotein C-II, which occurs as the minor form in plasma.

Its subcellular location is the secreted. Its function is as follows. Component of chylomicrons, very low-density lipoproteins (VLDL), low-density lipoproteins (LDL), and high-density lipoproteins (HDL) in plasma. Plays an important role in lipoprotein metabolism as an activator of lipoprotein lipase. The sequence is that of Apolipoprotein C-II (Apoc2) from Rattus norvegicus (Rat).